We begin with the raw amino-acid sequence, 56 residues long: Large ribosomal subunit protein bL33 (56 aa).

The protein belongs to the bacterial ribosomal protein bL33 family.

The chain is Large ribosomal subunit protein bL33 (rpmG) from Rickettsia prowazekii (strain Madrid E).